The primary structure comprises 471 residues: Apyrase 1 (471 aa).

The Cytoplasmic portion of the chain corresponds to 1-21 (MTAKRAIGRHESLADKVHRHR). A helical; Signal-anchor for type II membrane protein transmembrane segment spans residues 22-42 (GLLLVISIPIVLIALVLLLMP). Topologically, residues 43 to 471 (GTSTSVSVIE…GSAIEAVSSP (429 aa)) are lumenal. 72–82 (VIFDAGSSGSR) is an ATP binding site. E194 serves as the catalytic Proton acceptor. 218–228 (GVVDLGGGSVQ) provides a ligand contact to ATP. N333 carries an N-linked (GlcNAc...) asparagine glycan.

Belongs to the GDA1/CD39 NTPase family. Ca(2+) serves as cofactor. Expressed in roots, root hairs, root cap, leaves, stems, trichomes, phloem throughout the plant, guard cells, filaments of young stamens, stipules, papillae of stigmas, pollen, pollen tubes and the abscission zone of siliques.

Its subcellular location is the golgi apparatus membrane. The protein resides in the membrane. The enzyme catalyses a ribonucleoside 5'-triphosphate + 2 H2O = a ribonucleoside 5'-phosphate + 2 phosphate + 2 H(+). Functionally, catalyzes the hydrolysis of phosphoanhydride bonds of nucleoside tri- and di-phosphates. Substrate preference is ATP &gt; ADP. Functions with APY2 to reduce extracellular ATP level which is essential for pollen germination and normal plant development. Plays a role in the regulation of stomatal function by modulating extracellular ATP levels in guard cells. This Arabidopsis thaliana (Mouse-ear cress) protein is Apyrase 1 (APY1).